The primary structure comprises 420 residues: F-box protein At5g07610 (420 aa).

The tract at residues 1-25 (MSSCSRTRTKAPRSARSRRNGGFSS) is disordered. Residues 7-19 (TRTKAPRSARSRR) are compositionally biased toward basic residues. One can recognise an F-box domain in the interval 27 to 77 (SATIVADIDDVLIQILSFLPIKTLLRFKRVSKRWLSLITNPVFSNRVIKSN).

The protein is F-box protein At5g07610 of Arabidopsis thaliana (Mouse-ear cress).